A 242-amino-acid polypeptide reads, in one-letter code: Potassium/proton antiporter CemA (242 aa).

The next 2 helical transmembrane spans lie at 116–136 (IIFC…YSIL) and 200–220 (ISGF…YLIF).

This sequence belongs to the CemA family.

Its subcellular location is the plastid. It localises to the chloroplast inner membrane. It carries out the reaction K(+)(in) + H(+)(out) = K(+)(out) + H(+)(in). Contributes to K(+)/H(+) antiport activity by supporting proton efflux to control proton extrusion and homeostasis in chloroplasts in a light-dependent manner to modulate photosynthesis. Prevents excessive induction of non-photochemical quenching (NPQ) under continuous-light conditions. Indirectly promotes efficient inorganic carbon uptake into chloroplasts. This chain is Potassium/proton antiporter CemA, found in Chloranthus spicatus (Chulantree).